A 562-amino-acid chain; its full sequence is Ribonuclease Y (562 aa).

Residues 1–21 traverse the membrane as a helical segment; that stretch reads MNMLYFVLALLVGLAGGFFVG. The interval 108-129 is disordered; it reads AAQDAARERETLSADRQETRRE. The region spanning 252–312 is the KH domain; that stretch reads SVSVVPIPND…VRREVARHVL (61 aa). Residues 378 to 471 form the HD domain; that stretch reads VLKHSVQVAH…VAAADAISAA (94 aa).

This sequence belongs to the RNase Y family.

It localises to the cell membrane. Endoribonuclease that initiates mRNA decay. The polypeptide is Ribonuclease Y (Deinococcus geothermalis (strain DSM 11300 / CIP 105573 / AG-3a)).